Here is a 169-residue protein sequence, read N- to C-terminus: Transcription antitermination protein NusB (169 aa).

Belongs to the NusB family.

Functionally, involved in transcription antitermination. Required for transcription of ribosomal RNA (rRNA) genes. Binds specifically to the boxA antiterminator sequence of the ribosomal RNA (rrn) operons. The sequence is that of Transcription antitermination protein NusB from Rhodococcus opacus (strain B4).